Reading from the N-terminus, the 548-residue chain is Chaperonin GroEL (548 aa).

Residues 30–33 (TLGP), K51, 87–91 (DGTTT), G415, 479–481 (NAA), and D495 contribute to the ATP site.

This sequence belongs to the chaperonin (HSP60) family. As to quaternary structure, forms a cylinder of 14 subunits composed of two heptameric rings stacked back-to-back. Interacts with the co-chaperonin GroES.

Its subcellular location is the cytoplasm. The enzyme catalyses ATP + H2O + a folded polypeptide = ADP + phosphate + an unfolded polypeptide.. Its function is as follows. Together with its co-chaperonin GroES, plays an essential role in assisting protein folding. The GroEL-GroES system forms a nano-cage that allows encapsulation of the non-native substrate proteins and provides a physical environment optimized to promote and accelerate protein folding. This Escherichia fergusonii (strain ATCC 35469 / DSM 13698 / CCUG 18766 / IAM 14443 / JCM 21226 / LMG 7866 / NBRC 102419 / NCTC 12128 / CDC 0568-73) protein is Chaperonin GroEL.